A 509-amino-acid chain; its full sequence is Lysine--tRNA ligase (509 aa).

The Mg(2+) site is built by Glu-419 and Glu-426.

The protein belongs to the class-II aminoacyl-tRNA synthetase family. In terms of assembly, homodimer. Mg(2+) is required as a cofactor.

It is found in the cytoplasm. The enzyme catalyses tRNA(Lys) + L-lysine + ATP = L-lysyl-tRNA(Lys) + AMP + diphosphate. This chain is Lysine--tRNA ligase, found in Methylobacillus flagellatus (strain ATCC 51484 / DSM 6875 / VKM B-1610 / KT).